Reading from the N-terminus, the 204-residue chain is Peptide deformylase (204 aa).

Fe cation-binding residues include Cys131 and His174. The active site involves Glu175. His178 lines the Fe cation pocket.

The protein belongs to the polypeptide deformylase family. Requires Fe(2+) as cofactor.

The catalysed reaction is N-terminal N-formyl-L-methionyl-[peptide] + H2O = N-terminal L-methionyl-[peptide] + formate. Its function is as follows. Removes the formyl group from the N-terminal Met of newly synthesized proteins. Requires at least a dipeptide for an efficient rate of reaction. N-terminal L-methionine is a prerequisite for activity but the enzyme has broad specificity at other positions. The polypeptide is Peptide deformylase (Streptococcus thermophilus (strain CNRZ 1066)).